The sequence spans 540 residues: Phenylalanine--tRNA ligase beta subunit (540 aa).

Positions 268–342 (LRHTSVPFSL…MAYGYDRFTL (75 aa)) constitute a B5 domain. Residues Asp320, Asp326, Glu329, and Asp330 each coordinate Mg(2+).

Belongs to the phenylalanyl-tRNA synthetase beta subunit family. Type 2 subfamily. Tetramer of two alpha and two beta subunits. The cofactor is Mg(2+).

The protein resides in the cytoplasm. The enzyme catalyses tRNA(Phe) + L-phenylalanine + ATP = L-phenylalanyl-tRNA(Phe) + AMP + diphosphate + H(+). The protein is Phenylalanine--tRNA ligase beta subunit of Metallosphaera sedula (strain ATCC 51363 / DSM 5348 / JCM 9185 / NBRC 15509 / TH2).